A 214-amino-acid polypeptide reads, in one-letter code: Nucleoside triphosphate pyrophosphatase (214 aa).

Aspartate 79 acts as the Proton acceptor in catalysis.

This sequence belongs to the Maf family. A divalent metal cation serves as cofactor.

The protein resides in the cytoplasm. It catalyses the reaction a ribonucleoside 5'-triphosphate + H2O = a ribonucleoside 5'-phosphate + diphosphate + H(+). The enzyme catalyses a 2'-deoxyribonucleoside 5'-triphosphate + H2O = a 2'-deoxyribonucleoside 5'-phosphate + diphosphate + H(+). Its function is as follows. Nucleoside triphosphate pyrophosphatase. May have a dual role in cell division arrest and in preventing the incorporation of modified nucleotides into cellular nucleic acids. The sequence is that of Nucleoside triphosphate pyrophosphatase from Rhodococcus jostii (strain RHA1).